Reading from the N-terminus, the 254-residue chain is Major prion protein (254 aa).

The first 22 residues, 1–22 (MANLGYWLLALFVTMWTDVGLC), serve as a signal peptide directing secretion. Residues 23 to 38 (KKRPKPGGWNTGGSRY) are interaction with ADGRG6. The interaction with GRB2, ERI3 and SYN1 stretch occupies residues 23-231 (KKRPKPGGWN…QAYYDGRRSS (209 aa)). Residues 25-104 (RPKPGGWNTG…HNQWNKPSKP (80 aa)) form a disordered region. Pro-44 is modified (hydroxyproline). A run of 5 repeats spans residues 51-58 (PQGGTWGQ), 59-66 (PHGGGWGQ), 67-74 (PHGGSWGQ), 75-82 (PHGGSWGQ), and 83-90 (PHGGGWGQ). A 5 X 8 AA tandem repeats of P-H-G-G-G-W-G-Q region spans residues 51 to 90 (PQGGTWGQPHGGGWGQPHGGSWGQPHGGSWGQPHGGGWGQ). Residues 54 to 94 (GTWGQPHGGGWGQPHGGSWGQPHGGSWGQPHGGGWGQGGGT) are compositionally biased toward gly residues. Positions 60, 61, 62, 68, 69, 70, 76, 77, 78, 84, 85, and 86 each coordinate Cu(2+). A disulfide bridge connects residues Cys-178 and Cys-213. 2 N-linked (GlcNAc...) asparagine glycosylation sites follow: Asn-180 and Asn-196. Ser-230 is lipidated: GPI-anchor amidated serine. Residues 231–254 (SSTVLFSSPPVILLISFLIFLIVG) constitute a propeptide, removed in mature form.

This sequence belongs to the prion family. In terms of assembly, monomer and homodimer. Has a tendency to aggregate into amyloid fibrils containing a cross-beta spine, formed by a steric zipper of superposed beta-strands. Soluble oligomers may represent an intermediate stage on the path to fibril formation. Copper binding may promote oligomerization. Interacts with GRB2, APP, ERI3/PRNPIP and SYN1. Mislocalized cytosolically exposed PrP interacts with MGRN1; this interaction alters MGRN1 subcellular location and causes lysosomal enlargement. Interacts with APP. Interacts with KIAA1191. Interacts with ADGRG6. In terms of processing, N-glycosylated. In terms of tissue distribution, highly expressed in the brain, lung, kidney and heart. Expressed at low levels in the liver and spleen.

Its subcellular location is the cell membrane. It is found in the golgi apparatus. Its function is as follows. Its primary physiological function is unclear. May play a role in neuronal development and synaptic plasticity. May be required for neuronal myelin sheath maintenance. May promote myelin homeostasis through acting as an agonist for ADGRG6 receptor. May play a role in iron uptake and iron homeostasis. Soluble oligomers are toxic to cultured neuroblastoma cells and induce apoptosis (in vitro). Association with GPC1 (via its heparan sulfate chains) targets PRNP to lipid rafts. Also provides Cu(2+) or Zn(2+) for the ascorbate-mediated GPC1 deaminase degradation of its heparan sulfate side chains. This is Major prion protein (Prnp) from Mus musculus (Mouse).